Consider the following 495-residue polypeptide: Maintenance of mitochondrial morphology protein 1 (495 aa).

Topologically, residues 1 to 22 (MALQQHEPAPFAPQSSLSFTQG) are lumenal. Residues 23-43 (FLLGQLSVVLLIGAFIKFFIF) form a helical membrane-spanning segment. Residues 44 to 495 (GEAPPPPSRG…PVGTPGIPDN (452 aa)) lie on the Cytoplasmic side of the membrane. Disordered stretches follow at residues 63 to 94 (YSSV…PSTS), 269 to 320 (ASTE…SPKS), 382 to 428 (WPRM…EPEG), and 440 to 495 (GLGA…IPDN). Polar residues-rich tracts occupy residues 65-74 (SVYSPPQDSQ) and 82-94 (STSN…PSTS). The 252-residue stretch at 128–379 (QPESLDWFNV…EPRVQVVGLP (252 aa)) folds into the SMP-LTD domain. Pro residues predominate over residues 271–289 (TEPPEPLQTPAGSPAPPTS). Residues 418–428 (FSDDHGREPEG) are compositionally biased toward basic and acidic residues. Polar residues predominate over residues 458–469 (RSSSMTRQQSGG).

It belongs to the MMM1 family. In terms of assembly, homodimer. Component of the ER-mitochondria encounter structure (ERMES) or MDM complex, composed of mmm1, mdm10, mdm12 and mdm34. An MMM1 homodimer associates with one molecule of mdm12 on each side in a pairwise head-to-tail manner, and the SMP-LTD domains of mmm1 and mdm12 generate a continuous hydrophobic tunnel for phospholipid trafficking.

The protein resides in the endoplasmic reticulum membrane. Functionally, component of the ERMES/MDM complex, which serves as a molecular tether to connect the endoplasmic reticulum (ER) and mitochondria. Components of this complex are involved in the control of mitochondrial shape and protein biogenesis, and function in nonvesicular lipid trafficking between the ER and mitochondria. The mdm12-mmm1 subcomplex functions in the major beta-barrel assembly pathway that is responsible for biogenesis of all outer membrane beta-barrel proteins, and acts in a late step after the SAM complex. The mdm10-mdm12-mmm1 subcomplex further acts in the TOM40-specific pathway after the action of the mdm12-mmm1 complex. Essential for establishing and maintaining the structure of mitochondria and maintenance of mtDNA nucleoids. The sequence is that of Maintenance of mitochondrial morphology protein 1 from Penicillium rubens (strain ATCC 28089 / DSM 1075 / NRRL 1951 / Wisconsin 54-1255) (Penicillium chrysogenum).